We begin with the raw amino-acid sequence, 148 residues long: Large ribosomal subunit protein bL9 (148 aa).

Belongs to the bacterial ribosomal protein bL9 family.

Its function is as follows. Binds to the 23S rRNA. The protein is Large ribosomal subunit protein bL9 of Methylobacillus flagellatus (strain ATCC 51484 / DSM 6875 / VKM B-1610 / KT).